The following is a 159-amino-acid chain: Phosphopantetheine adenylyltransferase (159 aa).

S8 is a binding site for substrate. Residues 8 to 9 (SF) and H16 each bind ATP. Substrate is bound by residues K40, T72, and R86. Residues 87–89 (GLR), E97, and 122–128 (HSFVSSS) contribute to the ATP site.

This sequence belongs to the bacterial CoaD family. As to quaternary structure, homohexamer. Mg(2+) serves as cofactor.

It is found in the cytoplasm. It carries out the reaction (R)-4'-phosphopantetheine + ATP + H(+) = 3'-dephospho-CoA + diphosphate. It participates in cofactor biosynthesis; coenzyme A biosynthesis; CoA from (R)-pantothenate: step 4/5. In terms of biological role, reversibly transfers an adenylyl group from ATP to 4'-phosphopantetheine, yielding dephospho-CoA (dPCoA) and pyrophosphate. The protein is Phosphopantetheine adenylyltransferase of Synechococcus sp. (strain JA-2-3B'a(2-13)) (Cyanobacteria bacterium Yellowstone B-Prime).